We begin with the raw amino-acid sequence, 657 residues long: Glycogen debranching enzyme (657 aa).

Asp-336 (nucleophile) is an active-site residue. Glu-371 (proton donor) is an active-site residue. The interval 460–479 (ANGEENRDGTNNNYSNNHGK) is disordered.

Belongs to the glycosyl hydrolase 13 family.

It carries out the reaction Hydrolysis of (1-&gt;6)-alpha-D-glucosidic linkages to branches with degrees of polymerization of three or four glucose residues in limit dextrin.. The protein operates within glycan degradation; glycogen degradation. Removes maltotriose and maltotetraose chains that are attached by 1,6-alpha-linkage to the limit dextrin main chain, generating a debranched limit dextrin. The sequence is that of Glycogen debranching enzyme from Escherichia coli O81 (strain ED1a).